A 549-amino-acid polypeptide reads, in one-letter code: O-fucosyltransferase 29 (549 aa).

A helical; Signal-anchor for type II membrane protein membrane pass occupies residues 43–63; it reads TVMWTWVCGFMLFSLGVISLF. Asparagine 152 carries an N-linked (GlcNAc...) asparagine glycan. Residue 292 to 294 participates in substrate binding; that stretch reads HLR. 2 N-linked (GlcNAc...) asparagine glycosylation sites follow: asparagine 359 and asparagine 527. Positions 506–549 are disordered; that stretch reads PFSYDKTSTDDEEEDMSEENHNSTSPGHVHLSSADNERDEVFPD. Positions 540-549 are enriched in basic and acidic residues; it reads DNERDEVFPD.

It belongs to the glycosyltransferase GT106 family.

It is found in the membrane. Its pathway is glycan metabolism. This is O-fucosyltransferase 29 from Arabidopsis thaliana (Mouse-ear cress).